The primary structure comprises 484 residues: Phosphatidylinositol N-acetylglucosaminyltransferase subunit A (484 aa).

Topologically, residues 1–421 (MACRGGAGNG…RLDRLISHCG (421 aa)) are cytoplasmic. Ser21 and Ser24 each carry phosphoserine. The helical transmembrane segment at 422–442 (PVTGYIFALLAVFNFLFLIFL) threads the bilayer. Residues 443-484 (RWMTPDSIIDVAIDATGPRGAWTNNYSHSKRGGENNEISETR) lie on the Lumenal side of the membrane. Asn467 carries an N-linked (GlcNAc...) asparagine glycan.

This sequence belongs to the glycosyltransferase group 1 family. Glycosyltransferase 4 subfamily. In terms of assembly, component of the glycosylphosphatidylinositol-N-acetylglucosaminyltransferase (GPI-GnT) complex composed at least by PIGA, PIGC, PIGH, PIGP, PIGQ, PIGY and DPM2. Interacts with PIGC, PIGH, PIGP, PIGQ and DPM2. Interacts directly with PIGY; this interaction regulates glycosylphosphatidylinositol-N-acetylglucosaminyltransferase activity. Interacts with PIGQ.

It localises to the endoplasmic reticulum membrane. It catalyses the reaction a 1,2-diacyl-sn-glycero-3-phospho-(1D-myo-inositol) + UDP-N-acetyl-alpha-D-glucosamine = a 6-(N-acetyl-alpha-D-glucosaminyl)-1-(1,2-diacyl-sn-glycero-3-phospho)-1D-myo-inositol + UDP + H(+). It functions in the pathway glycolipid biosynthesis; glycosylphosphatidylinositol-anchor biosynthesis. Catalytic subunit of the glycosylphosphatidylinositol-N-acetylglucosaminyltransferase (GPI-GnT) complex that catalyzes the transfer of N-acetylglucosamine from UDP-N-acetylglucosamine to phosphatidylinositol and participates in the first step of GPI biosynthesis. The polypeptide is Phosphatidylinositol N-acetylglucosaminyltransferase subunit A (Homo sapiens (Human)).